Here is a 339-residue protein sequence, read N- to C-terminus: Fructose-1,6-bisphosphatase isozyme 2 (339 aa).

The important for interaction with ALDOA stretch occupies residues 3-10 (DRSPFETD). AMP is bound by residues Val18 and 28 to 32 (TGELT). Residues Asp69 and Glu98 each contribute to the Mg(2+) site. 113 to 114 (KY) contributes to the AMP binding site. 3 residues coordinate Mg(2+): Asp119, Leu121, and Asp122. A substrate-binding site is contributed by Asp122. Arg141 is an AMP binding site. The Nuclear localization signal motif lies at 204 to 208 (KKKGK). 213–216 (NEGY) contributes to the substrate binding site. Phosphotyrosine is present on residues Tyr216 and Tyr219. Substrate contacts are provided by residues 245-249 (YVGSM), Tyr265, and Lys275. Glu281 contacts Mg(2+).

This sequence belongs to the FBPase class 1 family. Homotetramer. Interacts with ALDOA; the interaction blocks inhibition by physiological concentrations of AMP and reduces inhibition by Ca(2+). Interacts with alpha-actinin and F-actin. Mg(2+) serves as cofactor.

The protein resides in the cell junction. It localises to the cytoplasm. It is found in the nucleus. Its subcellular location is the myofibril. The protein localises to the sarcomere. The protein resides in the z line. The catalysed reaction is beta-D-fructose 1,6-bisphosphate + H2O = beta-D-fructose 6-phosphate + phosphate. It functions in the pathway carbohydrate biosynthesis; gluconeogenesis. With respect to regulation, subject to complex allosteric regulation. The enzyme can assume an active R-state, or an inactive T-state. Intermediate conformations may exist. AMP acts as an allosteric inhibitor. Fructose 2,6-bisphosphate acts as a competitive inhibitor. Strongly inhibited by Ca(2+). Its function is as follows. Catalyzes the hydrolysis of fructose 1,6-bisphosphate to fructose 6-phosphate in the presence of divalent cations and probably participates in glycogen synthesis from carbohydrate precursors, such as lactate. This chain is Fructose-1,6-bisphosphatase isozyme 2 (FBP2), found in Bos taurus (Bovine).